Here is a 186-residue protein sequence, read N- to C-terminus: dCTP deaminase (186 aa).

107–112 (KSTYAR) serves as a coordination point for dCTP. Residue E133 is the Proton donor/acceptor of the active site. The dCTP site is built by Q152, Y166, and Q176.

This sequence belongs to the dCTP deaminase family. As to quaternary structure, homotrimer.

It carries out the reaction dCTP + H2O + H(+) = dUTP + NH4(+). It functions in the pathway pyrimidine metabolism; dUMP biosynthesis; dUMP from dCTP (dUTP route): step 1/2. Catalyzes the deamination of dCTP to dUTP. This is dCTP deaminase from Campylobacter curvus (strain 525.92).